Reading from the N-terminus, the 95-residue chain is Selenoprotein K (95 aa).

A helical membrane pass occupies residues 20–42 (LSFLTDMFWGITDFIVMFFQSII). A disordered region spans residues 48–95 (RRGCQNSSSRTRFDDGRGPPGNPRRRMGRIDHNSGPNAPPMSGGGUGR). Residue Sec93 is a non-standard amino acid, selenocysteine.

Belongs to the selenoprotein K family.

Its subcellular location is the endoplasmic reticulum membrane. The protein resides in the cell membrane. Its function is as follows. Required for Ca(2+) flux in immune cells and plays a role in T-cell proliferation and in T-cell and neutrophil migration. Involved in endoplasmic reticulum-associated degradation (ERAD) of soluble glycosylated proteins. Required for cell surface expression of CD36 and involved in macrophage uptake of low-density lipoprotein and in foam cell formation. Required for palmitoylation. In Xenopus tropicalis (Western clawed frog), this protein is Selenoprotein K (selenok).